Reading from the N-terminus, the 285-residue chain is MKIQTKATGVLERTSHYLKAGILREKPAWFNVVGSHPPMMDLTKKPKKFDTQAQENDPSRSLFQKKKGGDLFKTRSNIYDRQQRHNSISRVPKLEFLEDQLRDVFYHQHPWEFSRPKTLIENEGNESSQCDWSHMLQLYKPLDGESVVQRTLWLLQDSKKTGKTMSLFEAYDQARFEFYRLRMEEEMSSTVSKEESSMYGAIYPSTNLDWGIKKEQEYIDAWTKVAGEKTKVRDANKDGRTANGSMGADDVVESKQSIWETVFDASDVSEASLEENSNAQTKDNA.

It belongs to the mitochondrion-specific ribosomal protein mS23 family. In terms of assembly, component of the mitochondrial small ribosomal subunit.

It is found in the mitochondrion. The protein is Small ribosomal subunit protein mS23 (RSM25) of Debaryomyces hansenii (strain ATCC 36239 / CBS 767 / BCRC 21394 / JCM 1990 / NBRC 0083 / IGC 2968) (Yeast).